The sequence spans 520 residues: RNA-binding protein MEX3A (520 aa).

Residues 49–111 form a disordered region; the sequence is GLGEPPAPTA…QPPTAPKGAS (63 aa). Over residues 60-69 the composition is skewed to gly residues; that stretch reads EDGGGGGGGA. The span at 73-91 shows a compositional bias: pro residues; sequence PAAPPQPAPPPPPAAPPAA. KH domains follow at residues 132-193 and 223-284; these read TTEC…RREI and QVTI…REEI. Phosphoserine is present on Ser338. The interval 412 to 461 is disordered; that stretch reads SSSSAKARAGPPGAHRSPATSAGPELAGLPRRPPGEPLQGFSKLGGGGLR. Phosphoserine is present on Ser462. Residues 469 to 509 form an RING-type zinc finger; it reads CMVCFESEVTAALVPCGHNLFCMECAVRICERTDPECPVCH.

Phosphorylated. Highest levels found in fetal brain and testis. Detected also in thymus, salivary gland and uterus.

Its subcellular location is the cytoplasm. The protein localises to the nucleus. It is found in the P-body. RNA binding protein, may be involved in post-transcriptional regulatory mechanisms. This chain is RNA-binding protein MEX3A (MEX3A), found in Homo sapiens (Human).